A 128-amino-acid chain; its full sequence is Putative histidinol dehydrogenase (128 aa).

A disordered region spans residues 21-84 (QRPDIAPRHH…EGQEKASGRR (64 aa)). Composition is skewed to basic and acidic residues over residues 34–50 (HRAEREAVEADRSRRTA) and 72–81 (QGREGQEKAS).

It belongs to the histidinol dehydrogenase family.

The enzyme catalyses L-histidinol + 2 NAD(+) + H2O = L-histidine + 2 NADH + 3 H(+). It participates in amino-acid biosynthesis; L-histidine biosynthesis; L-histidine from 5-phospho-alpha-D-ribose 1-diphosphate: step 9/9. In terms of biological role, catalyzes the sequential NAD-dependent oxidations of L-histidinol to L-histidinaldehyde and then to L-histidine. The chain is Putative histidinol dehydrogenase (hisD) from Azospirillum brasilense.